Reading from the N-terminus, the 232-residue chain is MHLLIPAAGSGRRFGADRNKLLLPLLGQPVLAWALQAADQAQSITWIGIIGQPGDRADMEALVDQLQLATPVSWIQGGRERQESVFNGLRSLPSGAQQVLIHDGARCLATPTLFDRCSAALQTCPAFVAAVPVKDTIKQVAADGTIAATPDRSTLWAAQTPQGFTVESLLRCHRQGLKQQLAVTDDAALLEAFGLPVQIVEGEETNLKVTTPADLAIAELILKQRQFTAAIA.

This sequence belongs to the IspD/TarI cytidylyltransferase family. IspD subfamily.

The enzyme catalyses 2-C-methyl-D-erythritol 4-phosphate + CTP + H(+) = 4-CDP-2-C-methyl-D-erythritol + diphosphate. Its pathway is isoprenoid biosynthesis; isopentenyl diphosphate biosynthesis via DXP pathway; isopentenyl diphosphate from 1-deoxy-D-xylulose 5-phosphate: step 2/6. In terms of biological role, catalyzes the formation of 4-diphosphocytidyl-2-C-methyl-D-erythritol from CTP and 2-C-methyl-D-erythritol 4-phosphate (MEP). The chain is 2-C-methyl-D-erythritol 4-phosphate cytidylyltransferase from Synechococcus sp. (strain ATCC 27144 / PCC 6301 / SAUG 1402/1) (Anacystis nidulans).